The sequence spans 296 residues: Phosphatidylglycerol--prolipoprotein diacylglyceryl transferase (296 aa).

The next 4 helical transmembrane spans lie at 10–30, 57–77, 92–112, and 119–139; these read IAFS…LAAF, LLFY…MLFY, VWEG…ACWL, and LHFF…LGFG. Residue arginine 140 coordinates a 1,2-diacyl-sn-glycero-3-phospho-(1'-sn-glycerol). Transmembrane regions (helical) follow at residues 194–214, 220–240, and 254–274; these read QLYE…TFSM, YAVS…VEFV, and WLTM…VLLA.

It belongs to the Lgt family.

Its subcellular location is the cell inner membrane. The catalysed reaction is L-cysteinyl-[prolipoprotein] + a 1,2-diacyl-sn-glycero-3-phospho-(1'-sn-glycerol) = an S-1,2-diacyl-sn-glyceryl-L-cysteinyl-[prolipoprotein] + sn-glycerol 1-phosphate + H(+). The protein operates within protein modification; lipoprotein biosynthesis (diacylglyceryl transfer). In terms of biological role, catalyzes the transfer of the diacylglyceryl group from phosphatidylglycerol to the sulfhydryl group of the N-terminal cysteine of a prolipoprotein, the first step in the formation of mature lipoproteins. This is Phosphatidylglycerol--prolipoprotein diacylglyceryl transferase from Xanthomonas euvesicatoria pv. vesicatoria (strain 85-10) (Xanthomonas campestris pv. vesicatoria).